A 512-amino-acid chain; its full sequence is Kelch repeat protein C2 (512 aa).

The BTB domain maps to 2–67 (ESVIFSINGE…MRWKKINITI (66 aa)). The BACK domain occupies 102–176 (CIRMFNFSKR…LLKWIHKNPN (75 aa)). Kelch repeat units lie at residues 216-261 (IKHN…LHNC), 262-307 (LYII…VNDG), 309-354 (LYVI…FVND), 356-403 (IYVM…EYDG), 405-449 (IYAI…SCGD), and 452-498 (LIIA…THKS).

It belongs to the poxviruses Kelch family.

The protein is Kelch repeat protein C2 of Bos taurus (Bovine).